The chain runs to 206 residues: uncharacterized protein (206 aa).

This is an uncharacterized protein from Mycoplasma pneumoniae (strain ATCC 29342 / M129 / Subtype 1) (Mycoplasmoides pneumoniae).